We begin with the raw amino-acid sequence, 325 residues long: Casein kinase I isoform alpha (325 aa).

An N-acetylalanine modification is found at Ala-2. Ser-4 carries the post-translational modification Phosphoserine. N6-acetyllysine is present on Lys-8. Residues 17-285 (YKLVRKIGSG…YLRQLFRILF (269 aa)) enclose the Protein kinase domain. Residues 23–31 (IGSGSFGDI) and Lys-46 each bind ATP. The active-site Proton acceptor is the Asp-136.

It belongs to the protein kinase superfamily. CK1 Ser/Thr protein kinase family. Casein kinase I subfamily. Interacts with the Axin complex. Interacts with TUT1, leading to TUT1 phosphorylation. Interacts with FAM83A, FAM83B, FAM83C, FAM83D, FAM83E, FAM83F, FAM83G and FAM83H (via DUF1669). Interaction with FAM83H recruits CSNK1A1 to keratin filaments. Phosphorylated by MTOR in response to mitogenic stimulation, leading to its activation.

It is found in the cytoplasm. The protein localises to the cytoskeleton. Its subcellular location is the microtubule organizing center. The protein resides in the centrosome. It localises to the chromosome. It is found in the centromere. The protein localises to the kinetochore. Its subcellular location is the nucleus speckle. The protein resides in the cilium basal body. It localises to the spindle. The enzyme catalyses L-seryl-[protein] + ATP = O-phospho-L-seryl-[protein] + ADP + H(+). It carries out the reaction L-threonyl-[protein] + ATP = O-phospho-L-threonyl-[protein] + ADP + H(+). Functionally, casein kinases are operationally defined by their preferential utilization of acidic proteins such as caseins as substrates. Can phosphorylate a large number of proteins. Participates in Wnt signaling. Phosphorylates CTNNB1 at 'Ser-45'. May phosphorylate PER1 and PER2. May play a role in segregating chromosomes during mitosis. May play a role in keratin cytoskeleton disassembly and thereby, it may regulate epithelial cell migration. Acts as a positive regulator of mTORC1 and mTORC2 signaling in response to nutrients by mediating phosphorylation of DEPTOR inhibitor. Acts as an inhibitor of NLRP3 inflammasome assembly by mediating phosphorylation of NLRP3. The chain is Casein kinase I isoform alpha (CSNK1A1) from Oryctolagus cuniculus (Rabbit).